The primary structure comprises 246 residues: Transcription factor MYB113 (246 aa).

HTH myb-type domains are found at residues Pro-5 to Ile-61 and Lys-62 to His-112. 2 DNA-binding regions (H-T-H motif) span residues Trp-33–Leu-57 and Trp-85–Leu-108.

In terms of assembly, interacts with BHLH002/EGL3/MYC146, BHLH012/MYC1 and BHLH042/TT8.

It is found in the nucleus. Functionally, transcription activator, when associated with BHLH002/EGL3/MYC146, BHLH012/MYC1, or BHLH042/TT8. The protein is Transcription factor MYB113 (MYB113) of Arabidopsis thaliana (Mouse-ear cress).